Here is a 285-residue protein sequence, read N- to C-terminus: 4-diphosphocytidyl-2-C-methyl-D-erythritol kinase (285 aa).

The active site involves K12. Residue 95–105 coordinates ATP; the sequence is PMGGGVGGGSS. The active site involves D137.

It belongs to the GHMP kinase family. IspE subfamily.

It carries out the reaction 4-CDP-2-C-methyl-D-erythritol + ATP = 4-CDP-2-C-methyl-D-erythritol 2-phosphate + ADP + H(+). It participates in isoprenoid biosynthesis; isopentenyl diphosphate biosynthesis via DXP pathway; isopentenyl diphosphate from 1-deoxy-D-xylulose 5-phosphate: step 3/6. Its function is as follows. Catalyzes the phosphorylation of the position 2 hydroxy group of 4-diphosphocytidyl-2C-methyl-D-erythritol. The polypeptide is 4-diphosphocytidyl-2-C-methyl-D-erythritol kinase (Actinobacillus pleuropneumoniae serotype 7 (strain AP76)).